The chain runs to 377 residues: Lactosylceramide 1,3-N-acetyl-beta-D-glucosaminyltransferase (377 aa).

Over 1–12 (MLISARRLRRCQ) the chain is Cytoplasmic. Residues 13–30 (FFQLLTSCFVLSLMALLV) traverse the membrane as a helical; Signal-anchor for type II membrane protein segment. The Lumenal portion of the chain corresponds to 31 to 377 (QEDNSLINHV…DTYPCSAAWS (347 aa)). N-linked (GlcNAc...) asparagine glycosylation is found at asparagine 56, asparagine 167, and asparagine 275.

It belongs to the glycosyltransferase 31 family.

It localises to the golgi apparatus membrane. It carries out the reaction a beta-D-Gal-(1-&gt;4)-beta-D-Glc-(1&lt;-&gt;1)-Cer(d18:1(4E)) + UDP-N-acetyl-alpha-D-glucosamine = a beta-D-GlcNAc-(1-&gt;3)-beta-D-Gal-(1-&gt;4)-beta-D-Glc-(1&lt;-&gt;1)-Cer(d18:1(4E)) + UDP + H(+). It catalyses the reaction a neolactoside nLc4Cer(d18:1(4E)) + UDP-N-acetyl-alpha-D-glucosamine = a neolactoside IV(3)-beta-GlcNAc-nLc4Cer(d18:1(4E)) + UDP + H(+). The protein operates within protein modification; protein glycosylation. Beta-1,3-N-acetylglucosaminyltransferase that plays a key role in the synthesis of lacto- or neolacto-series carbohydrate chains on glycolipids. In Xenopus tropicalis (Western clawed frog), this protein is Lactosylceramide 1,3-N-acetyl-beta-D-glucosaminyltransferase (b3gnt5).